We begin with the raw amino-acid sequence, 432 residues long: MKFTLVATVLLTFSLSAFAVEYPVLTTASPDQVGFDSQKLHRLDGWIQNQIDAGYPSINLLVIKDNHIVLQKAWGYAKKYDGSTLLAHPIRATTNTMYDLASNTKMYATNFALQKLVYEGKIDVNDLVSKYIPGFKDMPGDKIKGKDKLRIIDILHHVAGFPADPQYPNKNVAGKLFSQSKSTTLEMIKKTPLEYQPGSKHIYSDVDYMILGFIIESITAMPLDRYVETTIYKPLGLKHTVFNPLMKGFTPPQIAATELHGNTRDGVIHFPNIRTNTLWGQVHDEKAWYSMGGVSGHAGLFSDTHDMAVLMQVMLNGGGYGNVKLFDNKTVAQFTRRSPEDATFGLGWRVNGNASMTPTFGVLASPQTYGHTGWTGTLTSIDPVNHMAIVILGNRPHSPVANPKVNPNVFVSGLLPAATYGWIVDQIYGSLK.

A helical; Signal-anchor membrane pass occupies residues Ala7–Leu25.

It belongs to the peptidase S12 family. YfeW subfamily.

It is found in the cell inner membrane. It carries out the reaction Preferential cleavage: (Ac)2-L-Lys-D-Ala-|-D-Ala. Also transpeptidation of peptidyl-alanyl moieties that are N-acyl substituents of D-alanine.. This Salmonella typhi protein is Putative D-alanyl-D-alanine carboxypeptidase.